Consider the following 76-residue polypeptide: uORF2 protein (76 aa).

Its function is as follows. Plays a role in viral replication. The sequence is that of uORF2 protein from Homo sapiens (Human).